A 380-amino-acid polypeptide reads, in one-letter code: SAM and SH3 domain-containing protein 3 (380 aa).

Disordered regions lie at residues methionine 1 to tryptophan 76 and leucine 96 to proline 168. The segment covering leucine 22 to valine 41 has biased composition (low complexity). 3 positions are modified to phosphoserine: serine 27, serine 34, and serine 42. At threonine 61 the chain carries Phosphothreonine. Phosphoserine is present on serine 97. At threonine 103 the chain carries Phosphothreonine. The residue at position 110 (serine 110) is a Phosphoserine. Threonine 112 carries the phosphothreonine modification. Serine 113 and serine 120 each carry phosphoserine. The segment covering leucine 141 to glutamate 150 has biased composition (polar residues). Residues proline 173–glutamate 234 form the SH3 domain. Positions proline 252 to tyrosine 316 constitute an SAM domain. Threonine 318 is subject to Phosphothreonine. Positions threonine 318–alanine 327 are enriched in acidic residues. The tract at residues threonine 318 to proline 380 is disordered. Residue serine 320 is modified to Phosphoserine. Residues glutamate 369 to proline 380 show a composition bias toward polar residues.

Preferentially expressed in lymphoid tissues. Expressed in bone marrow, thymus, spleen, lymph nodes and Peyer patches of gut. In the spleen and lymph nodes, expressed in both T- and B-cells. In the thymus, in the medulla and cortex.

Functionally, may function as a signaling adapter protein in lymphocytes. This chain is SAM and SH3 domain-containing protein 3 (Sash3), found in Mus musculus (Mouse).